Reading from the N-terminus, the 295-residue chain is Methionine aminopeptidase (295 aa).

His62 is a binding site for substrate. A divalent metal cation-binding residues include Asp82, Asp93, and His153. Substrate is bound at residue His161. 2 residues coordinate a divalent metal cation: Glu187 and Glu280.

As to quaternary structure, monomer. The cofactor is Co(2+). Zn(2+) is required as a cofactor. It depends on Mn(2+) as a cofactor. Requires Fe(2+) as cofactor.

The catalysed reaction is Release of N-terminal amino acids, preferentially methionine, from peptides and arylamides.. Removes the N-terminal methionine from nascent proteins. The N-terminal methionine is often cleaved when the second residue in the primary sequence is small and uncharged (Met-Ala-, Cys, Gly, Pro, Ser, Thr, or Val). This chain is Methionine aminopeptidase, found in Pyrococcus furiosus (strain ATCC 43587 / DSM 3638 / JCM 8422 / Vc1).